A 179-amino-acid polypeptide reads, in one-letter code: Putative DUP240 protein DFP1 (179 aa).

Helical transmembrane passes span 4-24 (FLLF…SGVL) and 26-46 (PAMV…IWSF).

It belongs to the DUP/COS family.

The protein localises to the membrane. This is Putative DUP240 protein DFP1 from Saccharomyces cerevisiae (strain ATCC 204508 / S288c) (Baker's yeast).